The chain runs to 741 residues: uncharacterized protein (741 aa).

Transmembrane regions (helical) follow at residues 34–54, 76–96, 120–140, 156–176, and 187–207; these read WLLW…LLII, LIIP…FING, LAVL…FVSL, LSVF…LIII, and LLLL…AFSI. Positions 404–423 are enriched in basic and acidic residues; sequence EAEEKERQEKEEKEKAEKDN. 2 disordered regions span residues 404–473 and 555–647; these read EAEE…FRPR and QKEL…ENAK. A compositionally biased stretch (polar residues) spans 424–439; the sequence is GNGQDSNKVNSVSTEP. Basic and acidic residues-rich tracts occupy residues 445–465 and 555–573; these read SDAD…DSSK and QKEL…DQKS. Residues 623–643 are compositionally biased toward acidic residues; it reads DNTDESEDKQSEEEEKFDEEI. Transmembrane regions (helical) follow at residues 655–675 and 715–735; these read AFFN…ENGA and VIIA…FFAY.

To M.pneumoniae MPN_333.

The protein localises to the cell membrane. This is an uncharacterized protein from Mycoplasma pneumoniae (strain ATCC 29342 / M129 / Subtype 1) (Mycoplasmoides pneumoniae).